The chain runs to 309 residues: Homoserine kinase (309 aa).

Residue 91–101 (PIGSGLGSSAC) coordinates ATP.

Belongs to the GHMP kinase family. Homoserine kinase subfamily.

The protein localises to the cytoplasm. The catalysed reaction is L-homoserine + ATP = O-phospho-L-homoserine + ADP + H(+). It participates in amino-acid biosynthesis; L-threonine biosynthesis; L-threonine from L-aspartate: step 4/5. Its function is as follows. Catalyzes the ATP-dependent phosphorylation of L-homoserine to L-homoserine phosphate. The chain is Homoserine kinase from Buchnera aphidicola subsp. Schizaphis graminum (strain Sg).